The primary structure comprises 207 residues: Ion-translocating oxidoreductase complex subunit G (207 aa).

The chain crosses the membrane as a helical span at residues 11 to 31; sequence GILLGFIALLCTIISAGIYFL. Residue Thr175 is modified to FMN phosphoryl threonine.

Belongs to the RnfG family. In terms of assembly, the complex is composed of six subunits: RnfA, RnfB, RnfC, RnfD, RnfE and RnfG. FMN serves as cofactor.

It is found in the cell inner membrane. In terms of biological role, part of a membrane-bound complex that couples electron transfer with translocation of ions across the membrane. This Haemophilus influenzae (strain PittEE) protein is Ion-translocating oxidoreductase complex subunit G.